The primary structure comprises 258 residues: Imidazole glycerol phosphate synthase subunit HisF (258 aa).

Catalysis depends on residues Asp12 and Asp131.

The protein belongs to the HisA/HisF family. As to quaternary structure, heterodimer of HisH and HisF.

It localises to the cytoplasm. The enzyme catalyses 5-[(5-phospho-1-deoxy-D-ribulos-1-ylimino)methylamino]-1-(5-phospho-beta-D-ribosyl)imidazole-4-carboxamide + L-glutamine = D-erythro-1-(imidazol-4-yl)glycerol 3-phosphate + 5-amino-1-(5-phospho-beta-D-ribosyl)imidazole-4-carboxamide + L-glutamate + H(+). Its pathway is amino-acid biosynthesis; L-histidine biosynthesis; L-histidine from 5-phospho-alpha-D-ribose 1-diphosphate: step 5/9. In terms of biological role, IGPS catalyzes the conversion of PRFAR and glutamine to IGP, AICAR and glutamate. The HisF subunit catalyzes the cyclization activity that produces IGP and AICAR from PRFAR using the ammonia provided by the HisH subunit. The protein is Imidazole glycerol phosphate synthase subunit HisF of Arthrobacter sp. (strain FB24).